The primary structure comprises 225 residues: Suppressor of cytokine signaling 3 (225 aa).

Residues 22-33 (LKTFSSKSEYQL) form a kinase inhibitory region (KIR) region. The segment at 34 to 45 (VVNAVRKLQESG) is extended SH2 subdomain (ESS). The SH2 domain maps to 46–142 (FYWSAVTGGE…APSFPSPPTE (97 aa)). The segment covering 131–142 (PGAPSFPSPPTE) has biased composition (pro residues). The disordered stretch occupies residues 131 to 162 (PGAPSFPSPPTEPSSEVPEQPSAQPLPGSPPR). The segment covering 143–155 (PSSEVPEQPSAQP) has biased composition (low complexity). The SOCS box domain maps to 177 to 224 (VLSRPLSSNVATLQHLCRKTVNGHLDSYEKVTQLPGPIREFLDQYDAP).

In terms of assembly, interacts with multiple activated proteins of the tyrosine kinase signaling pathway including IGF1 receptor, insulin receptor and JAK2. Binding to JAK2 is mediated through the KIR and SH2 domains to a phosphorylated tyrosine residue within the JAK2 JH1 domain. Binds specific activated tyrosine residues of the leptin, EPO, IL12, GSCF and gp130 receptors. Interaction with CSNK1E stabilizes SOCS3 protein. Component of the probable ECS(SOCS3) E3 ubiquitin-protein ligase complex which contains CUL5, RNF7/RBX2, Elongin BC complex and SOCS3. Interacts with CUL5, RNF7, ELOB and ELOC. Interacts with CUL2. Interacts with FGFR3. Interacts with INSR. Interacts with BCL10; this interaction may interfere with BCL10-binding with PELI2. Interacts with NOD2 (via CARD domain); the interaction promotes NOD2 degradation. Post-translationally, phosphorylated on tyrosine residues after stimulation by the cytokines, IL-2, EPO or IGF1. In terms of tissue distribution, widely expressed with high expression in heart, placenta, skeletal muscle, peripheral blood leukocytes, fetal and adult lung, and fetal liver and kidney. Lower levels in thymus.

Its pathway is protein modification; protein ubiquitination. Functionally, SOCS family proteins form part of a classical negative feedback system that regulates cytokine signal transduction. SOCS3 is involved in negative regulation of cytokines that signal through the JAK/STAT pathway. Inhibits cytokine signal transduction by binding to tyrosine kinase receptors including IL6ST/gp130, LIF, erythropoietin, insulin, IL12, GCSF and leptin receptors. Binding to JAK2 inhibits its kinase activity and regulates IL6 signaling. Suppresses fetal liver erythropoiesis. Regulates onset and maintenance of allergic responses mediated by T-helper type 2 cells. Probable substrate recognition component of a SCF-like ECS (Elongin BC-CUL2/5-SOCS-box protein) E3 ubiquitin-protein ligase complex which mediates the ubiquitination and subsequent proteasomal degradation of target proteins. This is Suppressor of cytokine signaling 3 from Homo sapiens (Human).